Here is a 228-residue protein sequence, read N- to C-terminus: Phosphatidylserine decarboxylase proenzyme (228 aa).

The active-site Schiff-base intermediate with substrate; via pyruvic acid is S197. S197 is subject to Pyruvic acid (Ser); by autocatalysis.

Belongs to the phosphatidylserine decarboxylase family. PSD-A subfamily. In terms of assembly, heterodimer of a large membrane-associated beta subunit and a small pyruvoyl-containing alpha subunit. Requires pyruvate as cofactor. Post-translationally, is synthesized initially as an inactive proenzyme. Formation of the active enzyme involves a self-maturation process in which the active site pyruvoyl group is generated from an internal serine residue via an autocatalytic post-translational modification. Two non-identical subunits are generated from the proenzyme in this reaction, and the pyruvate is formed at the N-terminus of the alpha chain, which is derived from the carboxyl end of the proenzyme. The post-translation cleavage follows an unusual pathway, termed non-hydrolytic serinolysis, in which the side chain hydroxyl group of the serine supplies its oxygen atom to form the C-terminus of the beta chain, while the remainder of the serine residue undergoes an oxidative deamination to produce ammonia and the pyruvoyl prosthetic group on the alpha chain.

The protein resides in the cell membrane. It carries out the reaction a 1,2-diacyl-sn-glycero-3-phospho-L-serine + H(+) = a 1,2-diacyl-sn-glycero-3-phosphoethanolamine + CO2. It participates in phospholipid metabolism; phosphatidylethanolamine biosynthesis; phosphatidylethanolamine from CDP-diacylglycerol: step 2/2. In terms of biological role, catalyzes the formation of phosphatidylethanolamine (PtdEtn) from phosphatidylserine (PtdSer). The protein is Phosphatidylserine decarboxylase proenzyme of Bacteroides thetaiotaomicron (strain ATCC 29148 / DSM 2079 / JCM 5827 / CCUG 10774 / NCTC 10582 / VPI-5482 / E50).